Consider the following 467-residue polypeptide: uncharacterized protein (467 aa).

N6-(pyridoxal phosphate)lysine is present on Lys-290.

The protein belongs to the class-III pyridoxal-phosphate-dependent aminotransferase family. It depends on pyridoxal 5'-phosphate as a cofactor.

This is an uncharacterized protein from Sinorhizobium fredii (strain NBRC 101917 / NGR234).